A 369-amino-acid chain; its full sequence is Transmembrane protein 198 (369 aa).

A run of 7 helical transmembrane segments spans residues 37–57 (VVPS…CFFG), 60–80 (CFKA…IFLL), 93–113 (VEAS…VTML), 117–137 (VGLF…TLIG), 148–168 (SVWV…VLTL), 181–201 (VFGA…FALV), and 216–236 (VCWT…LGVL). The segment at 266-308 (RQKEERRESSRKKKRKQPQSAQHTHAAKALHPEPAYRRKPNPI) is disordered.

It belongs to the TMEM198 family.

It localises to the membrane. The chain is Transmembrane protein 198 (tmem198ab) from Danio rerio (Zebrafish).